The sequence spans 400 residues: Formate-dependent phosphoribosylglycinamide formyltransferase (400 aa).

N(1)-(5-phospho-beta-D-ribosyl)glycinamide-binding positions include 22-23 (EL) and Glu-82. ATP-binding positions include Arg-115, Lys-156, 161-166 (SSGKGQ), 196-199 (EGFI), and Glu-204. In terms of domain architecture, ATP-grasp spans 120 to 309 (RLAAETLGLP…EFALHARAIL (190 aa)). The Mg(2+) site is built by Glu-268 and Glu-280. N(1)-(5-phospho-beta-D-ribosyl)glycinamide-binding positions include Asp-287, Lys-361, and 368 to 369 (RR).

The protein belongs to the PurK/PurT family. As to quaternary structure, homodimer.

It carries out the reaction N(1)-(5-phospho-beta-D-ribosyl)glycinamide + formate + ATP = N(2)-formyl-N(1)-(5-phospho-beta-D-ribosyl)glycinamide + ADP + phosphate + H(+). It functions in the pathway purine metabolism; IMP biosynthesis via de novo pathway; N(2)-formyl-N(1)-(5-phospho-D-ribosyl)glycinamide from N(1)-(5-phospho-D-ribosyl)glycinamide (formate route): step 1/1. In terms of biological role, involved in the de novo purine biosynthesis. Catalyzes the transfer of formate to 5-phospho-ribosyl-glycinamide (GAR), producing 5-phospho-ribosyl-N-formylglycinamide (FGAR). Formate is provided by PurU via hydrolysis of 10-formyl-tetrahydrofolate. The protein is Formate-dependent phosphoribosylglycinamide formyltransferase of Xanthomonas campestris pv. campestris (strain 8004).